The primary structure comprises 88 residues: MKTSVIFVLIVLNLMWSGEAQEVARTYCGSHLADTLADLCFGVVKRGGAQYAPYFWQKAYLGSRGKRGVVDECCFRPCTLDVLASYCG.

Residues 1–18 form the signal peptide; it reads MKTSVIFVLIVLNLMWSG. 3 disulfide bridges follow: Cys-28–Cys-74, Cys-40–Cys-87, and Cys-73–Cys-78. A propeptide spans 47-65 (c peptide like); sequence GGAQYAPYFWQKAYLGSRG.

This sequence belongs to the insulin family. As to quaternary structure, heterodimer of a B chain and an A chain linked by two disulfide bonds.

The protein resides in the secreted. Brain peptide responsible for activation of prothoracic glands to produce ecdysone in insects. This chain is Bombyxin B-8 (BBXB8), found in Bombyx mori (Silk moth).